The primary structure comprises 180 residues: Endothelin-2 (180 aa).

A signal peptide spans 1–26 (MVALPTAWCSVALALLVALHEGKSQS). A propeptide spanning residues 27-47 (AATSEEPPAPSARARGSHLRL) is cleaved from the precursor. 2 cysteine pairs are disulfide-bonded: Cys50/Cys64 and Cys52/Cys60. A propeptide spanning residues 71–180 (VNTPGQTAPY…ESSHSRWRKR (110 aa)) is cleaved from the precursor. An endothelin-like region spans residues 97–112 (CECYSTRDSACVTFCH). Positions 157-180 (NFTRHQQQKATREPESSHSRWRKR) are disordered.

The protein belongs to the endothelin/sarafotoxin family.

Its subcellular location is the secreted. Endothelins are endothelium-derived vasoconstrictor peptides. The polypeptide is Endothelin-2 (EDN2) (Atelerix albiventris (Middle-African hedgehog)).